The primary structure comprises 372 residues: Glutamate 5-kinase (372 aa).

K14 contacts ATP. S54, D141, and N153 together coordinate substrate. An ATP-binding site is contributed by 173 to 174 (TD). A PUA domain is found at 280–358 (RGTLVLDDGA…EAIVRELGYM (79 aa)).

It belongs to the glutamate 5-kinase family.

The protein resides in the cytoplasm. It carries out the reaction L-glutamate + ATP = L-glutamyl 5-phosphate + ADP. It functions in the pathway amino-acid biosynthesis; L-proline biosynthesis; L-glutamate 5-semialdehyde from L-glutamate: step 1/2. In terms of biological role, catalyzes the transfer of a phosphate group to glutamate to form L-glutamate 5-phosphate. This Pseudomonas syringae pv. tomato (strain ATCC BAA-871 / DC3000) protein is Glutamate 5-kinase.